The chain runs to 1527 residues: Rho guanine nucleotide exchange factor 11 (1527 aa).

The tract at residues 1–56 is disordered; that stretch reads MSIRLPHSIDRSASKKQSHLSSPIASWLSSLSSLGDSTPERTSPSHHRQPSDTSET. 4 positions are modified to phosphoserine: Ser2, Ser30, Ser32, and Ser51. The span at 19–37 shows a compositional bias: low complexity; that stretch reads HLSSPIASWLSSLSSLGDS. The region spanning 64–143 is the PDZ domain; sequence CVIIQKDQHG…LTLLGSSPPS (80 aa). A disordered region spans residues 216-247; sequence PCGETSQRTCEGRLSVDSQEADSGLDSGTERF. 2 positions are modified to phosphoserine: Ser262 and Ser268. Thr271 bears the Phosphothreonine mark. A phosphoserine mark is found at Ser272 and Ser288. In terms of domain architecture, RGSL spans 323 to 503; the sequence is ESDIIFQDLE…NTFMSHAGIR (181 aa). A coiled-coil region spans residues 461-487; the sequence is LRERQMAEKQLAALGDILSKYEEDRSA. Disordered stretches follow at residues 506–569 and 582–687; these read ESRS…QSIK and NSHQ…GRRS. Residues 509-519 show a composition bias toward polar residues; the sequence is SSCTAEKTQSA. Composition is skewed to basic and acidic residues over residues 539 to 551 and 624 to 645; these read SKKE…DKKR and KGRE…RSDV. Residues Ser643 and Ser671 each carry the phosphoserine modification. The span at 656–672 shows a compositional bias: low complexity; that stretch reads LHQSASSSASSLSTRSL. 2 positions are modified to phosphothreonine: Thr676 and Thr680. Residues 742-931 enclose the DH domain; that stretch reads DRQEVINELF…REILKFVNEA (190 aa). The PH domain occupies 973-1087; it reads KMIHEGPLTW…WMELLEEAVQ (115 aa). Disordered stretches follow at residues 1090-1184, 1231-1321, and 1379-1411; these read TKHP…NRGI, QAAG…TEPA, and AGPL…PQPY. A compositionally biased stretch (basic and acidic residues) spans 1126-1138; sequence EVYHTEKEPKKLP. Positions 1242–1251 are enriched in polar residues; it reads PTPSVVSITS. Ser1299 and Ser1304 each carry phosphoserine. Residues 1312-1321 show a composition bias toward low complexity; the sequence is AAEAASTEPA. Phosphoserine is present on residues Ser1462 and Ser1463. 2 positions are modified to phosphothreonine: Thr1467 and Thr1480. Residues 1480–1527 are disordered; the sequence is TDYSLSPPAKEALASDSQNGQEQGSCPEEGSDIALEDSATDTAVSPGP. Ser1485 is subject to Phosphoserine. Positions 1494–1503 are enriched in polar residues; sequence SDSQNGQEQG. Residues 1508–1518 show a composition bias toward acidic residues; sequence EGSDIALEDSA.

As to quaternary structure, interacts with RHOA, GNA13 and SLC1A6. Interacts with GNA12, PLXNB1 and PLXNB2. Interacts (via DH domain) with GCSAM (via C-terminus). Found in a complex with ARHGEF11 and ARHGEF12; binding to ARHGEF11 and ARHGEF12 enhances CDC42 GEF activity of PLEKHG4B, and PLEKHG4B, in turn, inhibits ARHGEF11- and ARHGEF12-mediated RHOA activation. In terms of processing, phosphorylated by MAP kinase p38 (MAPK11, MAPK12, MAPK13 and/or MAPK14). Ubiquitinated by the BCR(KLHL20) E3 ubiquitin ligase complex when previously phosphorylated by MAP kinase p38 (MAPK11, MAPK12, MAPK13 and/or MAPK14), leading to its degradation, thereby restricting RhoA activity and facilitating growth cone spreading and neurite outgrowth.

The protein localises to the cytoplasm. It is found in the membrane. In terms of biological role, may play a role in the regulation of RhoA GTPase by guanine nucleotide-binding alpha-12 (GNA12) and alpha-13 (GNA13). Acts as guanine nucleotide exchange factor (GEF) for RhoA GTPase and may act as GTPase-activating protein (GAP) for GNA12 and GNA13. Involved in neurotrophin-induced neurite outgrowth. This is Rho guanine nucleotide exchange factor 11 (Arhgef11) from Rattus norvegicus (Rat).